Here is a 312-residue protein sequence, read N- to C-terminus: Ribonuclease Z (312 aa).

The Zn(2+) site is built by H61, H63, D65, H66, H148, D216, and H275. The active-site Proton acceptor is the D65.

Belongs to the RNase Z family. In terms of assembly, homodimer. Requires Zn(2+) as cofactor.

The enzyme catalyses Endonucleolytic cleavage of RNA, removing extra 3' nucleotides from tRNA precursor, generating 3' termini of tRNAs. A 3'-hydroxy group is left at the tRNA terminus and a 5'-phosphoryl group is left at the trailer molecule.. Functionally, zinc phosphodiesterase, which displays some tRNA 3'-processing endonuclease activity. Probably involved in tRNA maturation, by removing a 3'-trailer from precursor tRNA. This Clostridium tetani (strain Massachusetts / E88) protein is Ribonuclease Z.